Here is a 430-residue protein sequence, read N- to C-terminus: Endo-beta-1,4-glucanase celB (430 aa).

Positions 1 to 16 are cleaved as a signal peptide; that stretch reads MALLLSLSLLATTISA. Residues asparagine 43 and asparagine 153 are each glycosylated (N-linked (GlcNAc...) asparagine). Catalysis depends on glutamate 216, which acts as the Nucleophile. The Proton donor role is filled by glutamate 221. Asparagine 395 carries an N-linked (GlcNAc...) asparagine glycan.

It belongs to the glycosyl hydrolase 7 (cellulase C) family.

The protein localises to the secreted. It carries out the reaction Endohydrolysis of (1-&gt;4)-beta-D-glucosidic linkages in cellulose, lichenin and cereal beta-D-glucans.. In terms of biological role, has endoglucanase activity on substrates containing beta-1,4 glycosidic bonds, like in carboxymethylcellulose (CMC), hydroxyethylcellulose (HEC) and beta-glucan. Involved in the degradation of complex natural cellulosic substrates. This chain is Endo-beta-1,4-glucanase celB (celB), found in Emericella nidulans (strain FGSC A4 / ATCC 38163 / CBS 112.46 / NRRL 194 / M139) (Aspergillus nidulans).